The sequence spans 700 residues: MARHTPIERYRNIGISAHIDAGKTTTTERILFYTGINHKIGEVHDGAATMDWMEQEQERGITITSAATTCFWKGMENNFAEHRINIIDTPGHVDFTIEVERSMRVLDGACMVYCAVGGVQPQSETVWRQANKYKVPRLAFVNKMDRTGANFFKVVDQMKLRLKASPVPMVIPIGAEENFTGVVDLLKMKAIIWDEASQGMLFDYREIPAELLELAKEWREKMVEAAAEASEELMNKYLEEGDLTEDEIKFGIRTRTIASEIQPMYCGSAFKNKGVQRMLDAVVEFMPSPVDIPPVKGMDEDENPVVRQANDTEKFSALAFKLMTDPFVGQLTFVRVYSGVLQKGDSVYNPIRGKKERIGRIVQMHANNRQEVSEIVAGDIAACVGLKDVTTGETLCDPGAIIMLERMVFPEPVITQAVEPKTKVDQEKMGIALQRLAQEDPSFRVKTDEESGQTLIAGMGELHLEIIVDRMKREFGVEANVGKPQVAYRETIRKTVEDAEGKFVRQSGGKGQYGHVVLKIEPNEPGKGIQFIDAIKGGVVPREFIPAVEKGINEAVTSGVLAGYPVVDVKVTLHFGSYHDVDSNENAFKMAAIFGFKEGCRKAGPVILEPMMAVEVETPEDYAGNVMGDLSSRRGMVQGMEDMVGGGKAIKAEVPLSEMFGYSTTLRSMSQGRATYTMEFKHYTEAPRNVSEAIMAARAK.

Residues 8–290 form the tr-type G domain; sequence ERYRNIGISA…AVVEFMPSPV (283 aa). GTP is bound by residues 17–24, 88–92, and 142–145; these read AHIDAGKT, DTPGH, and NKMD.

The protein belongs to the TRAFAC class translation factor GTPase superfamily. Classic translation factor GTPase family. EF-G/EF-2 subfamily.

It localises to the cytoplasm. Functionally, catalyzes the GTP-dependent ribosomal translocation step during translation elongation. During this step, the ribosome changes from the pre-translocational (PRE) to the post-translocational (POST) state as the newly formed A-site-bound peptidyl-tRNA and P-site-bound deacylated tRNA move to the P and E sites, respectively. Catalyzes the coordinated movement of the two tRNA molecules, the mRNA and conformational changes in the ribosome. In Albidiferax ferrireducens (strain ATCC BAA-621 / DSM 15236 / T118) (Rhodoferax ferrireducens), this protein is Elongation factor G.